A 78-amino-acid chain; its full sequence is Exodeoxyribonuclease 7 small subunit (78 aa).

This sequence belongs to the XseB family. Heterooligomer composed of large and small subunits.

It is found in the cytoplasm. It carries out the reaction Exonucleolytic cleavage in either 5'- to 3'- or 3'- to 5'-direction to yield nucleoside 5'-phosphates.. Functionally, bidirectionally degrades single-stranded DNA into large acid-insoluble oligonucleotides, which are then degraded further into small acid-soluble oligonucleotides. The protein is Exodeoxyribonuclease 7 small subunit of Synechococcus sp. (strain JA-2-3B'a(2-13)) (Cyanobacteria bacterium Yellowstone B-Prime).